We begin with the raw amino-acid sequence, 527 residues long: Rhamnogalacturonate lyase A (527 aa).

The N-terminal stretch at 1 to 20 (MLSKTFLLSSAVLWARVANA) is a signal peptide. Residues Asn27 and Asn46 are each glycosylated (N-linked (GlcNAc...) asparagine). Disulfide bonds link Cys50–Cys93 and Cys184–Cys193. Asn351 carries N-linked (GlcNAc...) asparagine glycosylation.

The protein belongs to the polysaccharide lyase 4 family.

Its subcellular location is the secreted. The catalysed reaction is Endotype eliminative cleavage of L-alpha-rhamnopyranosyl-(1-&gt;4)-alpha-D-galactopyranosyluronic acid bonds of rhamnogalacturonan I domains in ramified hairy regions of pectin leaving L-rhamnopyranose at the reducing end and 4-deoxy-4,5-unsaturated D-galactopyranosyluronic acid at the non-reducing end.. Functionally, pectinolytic enzymes consist of four classes of enzymes: pectin lyase, polygalacturonase, pectin methylesterase and rhamnogalacturonase. Degrades the rhamnogalacturonan I (RG-I) backbone of pectin. Active against linseed rhamnogalacturonan. This is Rhamnogalacturonate lyase A (rglA) from Emericella nidulans (strain FGSC A4 / ATCC 38163 / CBS 112.46 / NRRL 194 / M139) (Aspergillus nidulans).